Reading from the N-terminus, the 501-residue chain is Raftlin-2 (501 aa).

2 disordered regions span residues 1-20 (MGCG…GKIF) and 196-239 (SWNE…RKGE). The N-myristoyl glycine moiety is linked to residue G2. The S-palmitoyl cysteine moiety is linked to residue C3. Positions 220 to 233 (GQYQMEQNGSPTSS) are enriched in polar residues. S405 is modified (phosphoserine). The segment at 407–449 (AQTPDKKASRHIKGEDKNKATSRSIGLDTTSSQPAESRHLPEE) is disordered. Residue T409 is modified to Phosphothreonine. Residues 410–425 (PDKKASRHIKGEDKNK) are compositionally biased toward basic and acidic residues. Residues 427–441 (TSRSIGLDTTSSQPA) are compositionally biased toward polar residues. A Phosphoserine modification is found at S430.

This sequence belongs to the raftlin family.

Its subcellular location is the cell membrane. Functionally, upon bacterial lipopolysaccharide stimulation, mediates clathrin-dependent internalization of TLR4 in dendritic cells, resulting in activation of TICAM1-mediated signaling and subsequent IFNB1 production. May regulate B-cell antigen receptor-mediated signaling. The chain is Raftlin-2 (RFTN2) from Homo sapiens (Human).